A 93-amino-acid polypeptide reads, in one-letter code: MDGIKYIVFTEKSIRLLGNNQYTSNVESGSTRTEIKHWVELFFGVKVIAMNSHRLQGKGRRMGPIIGHTMHYRRMIITLQPGYSIPPLIEKRT.

Belongs to the universal ribosomal protein uL23 family. Part of the 50S ribosomal subunit.

Its subcellular location is the plastid. It localises to the chloroplast. Its function is as follows. Binds to 23S rRNA. The chain is Large ribosomal subunit protein uL23cz/uL23cy (rpl23-A) from Piper cenocladum (Ant piper).